Reading from the N-terminus, the 360-residue chain is MKDSIIAKLESLKERYEELEALLGDVSVISDQDKFRAYSKEYSQLEEVVKCFNRWTQLNQNIEEAEILLDDPEMKEMAQMEIEESKAEIEEVEQQLQILLLPKDPNDEYNCYLEIRAGTGGDEAGIFAGDLFRMYSRYAESKRWCVEMLSANESEQGGYKEVIVKVSGEGVYGQLKFESGGHRVQRVPKTESQGRIHTSACTVAVMPELPESEMPEINPADLRIDTYRSSGAGGQHVNTTDSAVRITHIPTGIVVECQDERSQHKNKAKAMSVLASRIVQAEQERQAAEQTDMRRNLLGSGDRSDKIRTYNYPQGRVTDHRINLTIYRLDEVMNGKIDELIQPIITEYQADQLAALSEQN.

At Gln235 the chain carries N5-methylglutamine. Positions 285-295 (RQAAEQTDMRR) are enriched in basic and acidic residues. Residues 285-309 (RQAAEQTDMRRNLLGSGDRSDKIRT) are disordered.

The protein belongs to the prokaryotic/mitochondrial release factor family. Post-translationally, methylated by PrmC. Methylation increases the termination efficiency of RF1.

The protein resides in the cytoplasm. Functionally, peptide chain release factor 1 directs the termination of translation in response to the peptide chain termination codons UAG and UAA. The sequence is that of Peptide chain release factor 1 from Haemophilus influenzae (strain 86-028NP).